The primary structure comprises 344 residues: Dihydroorotate dehydrogenase (quinone) (344 aa).

Residues alanine 61–lysine 65 and threonine 85 each bind FMN. Residue lysine 65 coordinates substrate. A substrate-binding site is contributed by asparagine 110–phenylalanine 114. FMN contacts are provided by asparagine 138 and asparagine 171. Position 171 (asparagine 171) interacts with substrate. Catalysis depends on serine 174, which acts as the Nucleophile. Asparagine 176 is a binding site for substrate. FMN contacts are provided by lysine 216 and threonine 244. Asparagine 245–threonine 246 is a binding site for substrate. FMN is bound by residues glycine 267, glycine 296, and tyrosine 317 to serine 318.

It belongs to the dihydroorotate dehydrogenase family. Type 2 subfamily. In terms of assembly, monomer. FMN serves as cofactor.

The protein resides in the cell membrane. The enzyme catalyses (S)-dihydroorotate + a quinone = orotate + a quinol. It functions in the pathway pyrimidine metabolism; UMP biosynthesis via de novo pathway; orotate from (S)-dihydroorotate (quinone route): step 1/1. Functionally, catalyzes the conversion of dihydroorotate to orotate with quinone as electron acceptor. This Psychrobacter arcticus (strain DSM 17307 / VKM B-2377 / 273-4) protein is Dihydroorotate dehydrogenase (quinone).